Consider the following 211-residue polypeptide: Ribosomal RNA small subunit methyltransferase G (211 aa).

S-adenosyl-L-methionine-binding positions include glycine 81, leucine 86, 132–133 (AE), and arginine 147.

The protein belongs to the methyltransferase superfamily. RNA methyltransferase RsmG family.

The protein localises to the cytoplasm. The catalysed reaction is guanosine(527) in 16S rRNA + S-adenosyl-L-methionine = N(7)-methylguanosine(527) in 16S rRNA + S-adenosyl-L-homocysteine. Functionally, specifically methylates the N7 position of guanine in position 527 of 16S rRNA. In Dichelobacter nodosus (strain VCS1703A), this protein is Ribosomal RNA small subunit methyltransferase G.